Here is a 474-residue protein sequence, read N- to C-terminus: PRAME family member 1 (474 aa).

An LRR 1; degenerate repeat occupies 97–124 (RWKLQVLDLRDVDENFWARWPGAWALSC). Residues 179 to 203 (HLCCSKLVNYLTPIKYLRKSLKIIY) form an LRR 2; degenerate repeat. An LRR 3; degenerate repeat occupies 204 to 230 (LNSIQELEIRNMSWPRLIRKLRCYLKE). An LRR 4; degenerate repeat occupies 231-265 (MKNLRKLVFSRCHHYTSDNELEGRLVAKFSSVFLR). 5 LRR repeats span residues 266–291 (LEHL…IRCL), 292–323 (QNPL…GYLK), 324–342 (HLNL…PLGA), 348–375 (AASL…GLSR), and 376–400 (CSQL…LLRH).

It belongs to the PRAME family.

The polypeptide is PRAME family member 1 (Homo sapiens (Human)).